A 464-amino-acid chain; its full sequence is NADH dehydrogenase [ubiquinone] flavoprotein 1, mitochondrial (464 aa).

A mitochondrion-targeting transit peptide spans 1-20 (MLAARRLLGGSLPSRVSVRF). Position 81 is an N6-acetyllysine; alternate (Lys-81). Position 81 is an N6-succinyllysine; alternate (Lys-81). An NADH-binding site is contributed by 87–96 (GRGGAGFPTG). Lys-104 bears the N6-acetyllysine mark. Residue 199 to 247 (RGAGAYICGEETALIESIEGKQGKPRLKPPFPADVGVFGCPTTVANVET) coordinates FMN. Residue Arg-257 is modified to Omega-N-methylarginine. Position 375 is an N6-acetyllysine (Lys-375). Residues Cys-379, Cys-382, Cys-385, and Cys-425 each coordinate [4Fe-4S] cluster.

The protein belongs to the complex I 51 kDa subunit family. In terms of assembly, core subunit of respiratory chain NADH dehydrogenase (Complex I) which is composed of 45 different subunits. This is a component of the flavoprotein-sulfur (FP) fragment of the enzyme. Interacts with RAB5IF. FMN is required as a cofactor. It depends on [4Fe-4S] cluster as a cofactor.

Its subcellular location is the mitochondrion inner membrane. The enzyme catalyses a ubiquinone + NADH + 5 H(+)(in) = a ubiquinol + NAD(+) + 4 H(+)(out). Its function is as follows. Core subunit of the mitochondrial membrane respiratory chain NADH dehydrogenase (Complex I) which catalyzes electron transfer from NADH through the respiratory chain, using ubiquinone as an electron acceptor. Part of the peripheral arm of the enzyme, where the electrons from NADH are accepted by flavin mononucleotide (FMN) and then passed along a chain of iron-sulfur clusters by electron tunnelling to the final acceptor ubiquinone. Contains FMN, which is the initial electron acceptor as well as one iron-sulfur cluster. The polypeptide is NADH dehydrogenase [ubiquinone] flavoprotein 1, mitochondrial (Macaca fascicularis (Crab-eating macaque)).